The following is a 238-amino-acid chain: Orotidine 5'-phosphate decarboxylase (238 aa).

Residues D10, K32, 59 to 68, T122, R184, Q193, G213, and R214 contribute to the substrate site; that span reads DLKLHDIPNT. Residue K61 is the Proton donor of the active site.

Belongs to the OMP decarboxylase family. Type 1 subfamily. In terms of assembly, homodimer.

It carries out the reaction orotidine 5'-phosphate + H(+) = UMP + CO2. Its pathway is pyrimidine metabolism; UMP biosynthesis via de novo pathway; UMP from orotate: step 2/2. Its function is as follows. Catalyzes the decarboxylation of orotidine 5'-monophosphate (OMP) to uridine 5'-monophosphate (UMP). This Bacillus cytotoxicus (strain DSM 22905 / CIP 110041 / 391-98 / NVH 391-98) protein is Orotidine 5'-phosphate decarboxylase.